Reading from the N-terminus, the 618-residue chain is MGNYKSRPTQTCTDEWKKKVSESYVITIERLEDDLKIKEKELTELRNIFGSDEAFSKVNLNYHTENGLSLLHLCCICGGNKSHIRTLMLKGLRPSRLTRNGFTALHLAVYKDNAELITSLLHGGADIQQVGYGGLTALHIATIAGHLEAADVLLQHGANVNIQDAVFFTPLHIAAYYGHEQVTRLLLKFGADVNVSGEVGDRPLHLASAKGFLNIAKLLMEEGSKADVNAQDNEDHVPLHFCSRFGHHDIVKYLLQNDLEVQPHVVNIYGDTPLHLACYNGKFEVAKEIIQISGTESLTKENIFSETAFHSACTYGKSIDLVKFLLDQNVININHQGRDGHTGLHSACYHGHIHLVQFLLDNGADMNLVACDPSRSSGEKDEQTCLMWAYEKGHDAIVTLLKHYKRPQDELPCNEYSQPGGDGSYVSVPSPLGKIKSMTKEKADILLLRAGLPSHFHLQLSEIEFHEIIGSGSFGKVYKGRCRNKIVAIKRYRANTYCSKSDVDMFCREVSILCQLNHPCVIQFVGACLNDPSQFAIVTQYISGGSLFSLLHEQKRILDLQSKLIIAVDVARGMEYLHNLTQPIIHRDLNRSLKYLSAFCCCPNHLFLTAHTIYLLAP.

Residue glycine 2 is the site of N-myristoyl glycine attachment. Positions serine 21–serine 51 form a coiled coil. 10 ANK repeats span residues asparagine 66 to arginine 96, asparagine 100 to glutamine 129, glycine 133 to isoleucine 162, valine 166 to valine 195, valine 199 to valine 228, glutamate 234 to proline 263, tyrosine 269 to leucine 298, phenylalanine 304 to histidine 335, aspartate 339 to leucine 368, and aspartate 381 to glutamate 410. One can recognise a Protein kinase domain in the interval isoleucine 463–proline 618. ATP-binding positions include isoleucine 469–valine 477 and lysine 490. Aspartate 588 (proton acceptor) is an active-site residue.

The protein belongs to the protein kinase superfamily. TKL Ser/Thr protein kinase family. MAP kinase kinase kinase subfamily. As to quaternary structure, interacts with TNNI3, ACTC, ACTA1, MYBPC3, AIP, FABP3 and HADHB. The cofactor is Mg(2+). Post-translationally, autophosphorylated.

The protein resides in the nucleus. It is found in the cytoplasm. It catalyses the reaction L-seryl-[protein] + ATP = O-phospho-L-seryl-[protein] + ADP + H(+). The enzyme catalyses L-threonyl-[protein] + ATP = O-phospho-L-threonyl-[protein] + ADP + H(+). Its function is as follows. May play a role in cardiac physiology. In Pongo abelii (Sumatran orangutan), this protein is Serine/threonine-protein kinase TNNI3K.